The primary structure comprises 101 residues: Urease subunit beta (101 aa).

It belongs to the urease beta subunit family. In terms of assembly, heterotrimer of UreA (gamma), UreB (beta) and UreC (alpha) subunits. Three heterotrimers associate to form the active enzyme.

It is found in the cytoplasm. The catalysed reaction is urea + 2 H2O + H(+) = hydrogencarbonate + 2 NH4(+). Its pathway is nitrogen metabolism; urea degradation; CO(2) and NH(3) from urea (urease route): step 1/1. In Jannaschia sp. (strain CCS1), this protein is Urease subunit beta.